The primary structure comprises 211 residues: Mediator of RNA polymerase II transcription subunit 20 (211 aa).

Belongs to the Mediator complex subunit 20 family. Component of the Mediator complex.

The protein localises to the nucleus. Functionally, component of the Mediator complex, a coactivator involved in the regulated transcription of nearly all RNA polymerase II-dependent genes. Mediator functions as a bridge to convey information from gene-specific regulatory proteins to the basal RNA polymerase II transcription machinery. Mediator is recruited to promoters by direct interactions with regulatory proteins and serves as a scaffold for the assembly of a functional preinitiation complex with RNA polymerase II and the general transcription factors. The chain is Mediator of RNA polymerase II transcription subunit 20 (MED20) from Gallus gallus (Chicken).